The following is a 495-amino-acid chain: Protein YhjJ (495 aa).

An N-terminal signal peptide occupies residues 1–24 (MQGTKIRLLAGSLLMLASAGYVQA).

The protein belongs to the peptidase M16 family.

It localises to the periplasm. The sequence is that of Protein YhjJ (yhjJ) from Salmonella typhimurium (strain LT2 / SGSC1412 / ATCC 700720).